Consider the following 250-residue polypeptide: MPEPGSEAIWLWLGTAGMFLGMLYFIARGWGETDSRRQKFYIATILITAIAFVNYLAMALGFGLTIVEFAGEEHPIYWARYSDWLFTTPLLLYDLGLLAGADRNTITSLVSLDVLMIGTGLVATLSPGSGVLSAGAERLVWWGISTAFLLVLLYFLFSSLSGRVADLPSDTRSTFKTLRNLVTVVWLVYPVWWLIGTEGIGLVGIGIETAGFMVIDLTAKVGFGIILLRSHGVLDGAAETTGTGATPADD.

Topologically, residues 1 to 9 (MPEPGSEAI) are extracellular. Residues 10 to 27 (WLWLGTAGMFLGMLYFIA) form a helical membrane-spanning segment. At 28–41 (RGWGETDSRRQKFY) the chain is on the cytoplasmic side. Residues 42–60 (IATILITAIAFVNYLAMAL) traverse the membrane as a helical segment. The Extracellular segment spans residues 61-77 (GFGLTIVEFAGEEHPIY). A helical transmembrane segment spans residues 78-94 (WARYSDWLFTTPLLLYD). Topologically, residues 95-105 (LGLLAGADRNT) are cytoplasmic. A helical membrane pass occupies residues 106 to 125 (ITSLVSLDVLMIGTGLVATL). Topologically, residues 126–138 (SPGSGVLSAGAER) are extracellular. Residues 139 to 158 (LVWWGISTAFLLVLLYFLFS) form a helical membrane-spanning segment. Residues 159 to 176 (SLSGRVADLPSDTRSTFK) lie on the Cytoplasmic side of the membrane. The chain crosses the membrane as a helical span at residues 177–195 (TLRNLVTVVWLVYPVWWLI). The Extracellular portion of the chain corresponds to 196–207 (GTEGIGLVGIGI). The chain crosses the membrane as a helical span at residues 208-227 (ETAGFMVIDLTAKVGFGIIL). An N6-(retinylidene)lysine modification is found at Lys220. Over 228 to 250 (LRSHGVLDGAAETTGTGATPADD) the chain is Cytoplasmic.

It belongs to the archaeal/bacterial/fungal opsin family. Homotrimer.

The protein localises to the cell membrane. Its function is as follows. Light-driven proton pump. This chain is Cruxrhodopsin-1 (cop1), found in Haloarcula argentinensis.